A 495-amino-acid chain; its full sequence is Divinyl ether synthase CYP74M3 (495 aa).

C446 serves as a coordination point for heme.

This sequence belongs to the cytochrome P450 family. Heme is required as a cofactor.

The enzyme catalyses (13S)-hydroperoxy-(9Z,11E)-octadecadienoate = etheroleate + H2O. It catalyses the reaction (13S)-hydroperoxy-(9Z,11E,15Z)-octadecatrienoate = etherolenate + H2O. It functions in the pathway lipid metabolism; oxylipin biosynthesis. Its function is as follows. Divinyl ether synthase involved in oxylipin biosynthesis. Catalyzes the conversion of (13S)-hydroperoxy-(9Z,11E)-octadecadienoate (13-HPOD) to etheroleate and (13S)-hydroperoxy-(9Z,11E,15Z)-octadecatrienoate (13-HPOT) to etherolenate. Has no activity with the corresponding 9-hydroperoxides (9-HPOD and 9-HPOT). In Selaginella moellendorffii (Spikemoss), this protein is Divinyl ether synthase CYP74M3.